A 505-amino-acid polypeptide reads, in one-letter code: Cobyric acid synthase (505 aa).

The GATase cobBQ-type domain occupies 260–453 (RIAVAAIYFP…FHGIIDEPEV (194 aa)). The active-site Nucleophile is the cysteine 341. Residue histidine 445 is part of the active site.

The protein belongs to the CobB/CobQ family. CobQ subfamily.

It participates in cofactor biosynthesis; adenosylcobalamin biosynthesis. In terms of biological role, catalyzes amidations at positions B, D, E, and G on adenosylcobyrinic A,C-diamide. NH(2) groups are provided by glutamine, and one molecule of ATP is hydrogenolyzed for each amidation. The polypeptide is Cobyric acid synthase (Chlorobium phaeobacteroides (strain DSM 266 / SMG 266 / 2430)).